A 93-amino-acid chain; its full sequence is Probable Fe(2+)-trafficking protein (93 aa).

This sequence belongs to the Fe(2+)-trafficking protein family.

Could be a mediator in iron transactions between iron acquisition and iron-requiring processes, such as synthesis and/or repair of Fe-S clusters in biosynthetic enzymes. The polypeptide is Probable Fe(2+)-trafficking protein (Polaromonas naphthalenivorans (strain CJ2)).